The primary structure comprises 33 residues: Putative makorin-5 (33 aa).

This chain is Putative makorin-5 (MKRN9P), found in Homo sapiens (Human).